The following is a 368-amino-acid chain: o-succinylbenzoate synthase (368 aa).

Lys183 acts as the Proton donor in catalysis. 3 residues coordinate Mg(2+): Asp213, Glu239, and Asp264. Lys290 serves as the catalytic Proton acceptor.

This sequence belongs to the mandelate racemase/muconate lactonizing enzyme family. MenC type 1 subfamily. Monomer. The cofactor is a divalent metal cation.

The catalysed reaction is (1R,6R)-6-hydroxy-2-succinyl-cyclohexa-2,4-diene-1-carboxylate = 2-succinylbenzoate + H2O. It functions in the pathway quinol/quinone metabolism; 1,4-dihydroxy-2-naphthoate biosynthesis; 1,4-dihydroxy-2-naphthoate from chorismate: step 4/7. Its pathway is cofactor biosynthesis; phylloquinone biosynthesis. Converts 2-succinyl-6-hydroxy-2,4-cyclohexadiene-1-carboxylate (SHCHC) to 2-succinylbenzoate (OSB). Does not show N-succinylamino acid racemase (NSAR) activity with N-succinyl-L-phenylglycine as substrate. The polypeptide is o-succinylbenzoate synthase (Desulfotalea psychrophila (strain LSv54 / DSM 12343)).